We begin with the raw amino-acid sequence, 380 residues long: Beta-1,3-N-acetylglucosaminyltransferase lunatic fringe (380 aa).

The Cytoplasmic portion of the chain corresponds to 1-8 (MLKRCGRR). Residues 9–29 (LLLALAGALLACLLVLTADPP) form a helical; Signal-anchor for type II membrane protein membrane-spanning segment. The Lumenal segment spans residues 30–380 (PPPVPAERGR…TSWCPRSAIF (351 aa)). Residues 85-110 (SRRDVGPPPGGAPRPADGPPRPLAEP) form a disordered region. Over residues 90–107 (GPPPGGAPRPADGPPRPL) the composition is skewed to pro residues. R130 contacts substrate. A glycan (N-linked (GlcNAc...) asparagine) is linked at N168. Intrachain disulfides connect C169–C180 and C198–C261. D202 is a substrate binding site. Residue D203 participates in Mn(2+) binding. D291 is an active-site residue. A Mn(2+)-binding site is contributed by H315. Cysteines 365 and 374 form a disulfide.

It belongs to the glycosyltransferase 31 family. Mn(2+) is required as a cofactor. Requires Co(2+) as cofactor. A soluble form may be derived from the membrane form by proteolytic processing.

The protein resides in the golgi apparatus. It is found in the golgi apparatus membrane. It carries out the reaction 3-O-(alpha-L-fucosyl)-L-threonyl-[EGF-like domain protein] + UDP-N-acetyl-alpha-D-glucosamine = 3-O-(N-acetyl-beta-D-glucosaminyl-(1-&gt;3)-alpha-L-fucosyl)-L-threonyl-[EGF-like domain protein] + UDP + H(+). It catalyses the reaction 3-O-(alpha-L-fucosyl)-L-seryl-[EGF-like domain protein] + UDP-N-acetyl-alpha-D-glucosamine = 3-O-(N-acetyl-beta-D-glucosaminyl-(1-&gt;3)-alpha-L-fucosyl)-L-seryl-[EGF-like domain protein] + UDP + H(+). Glycosyltransferase that initiates the elongation of O-linked fucose residues attached to EGF-like repeats in the extracellular domain of Notch molecules. Modulates NOTCH1 activity by modifying O-fucose residues at specific EGF-like domains resulting in inhibition of NOTCH1 activation by JAG1 and enhancement of NOTCH1 activation by DLL1 via an increase in its binding to DLL1. Decreases the binding of JAG1 to NOTCH2 but not that of DLL1. Essential mediator of somite segmentation and patterning. In Bos taurus (Bovine), this protein is Beta-1,3-N-acetylglucosaminyltransferase lunatic fringe (LFNG).